A 269-amino-acid chain; its full sequence is Shikimate dehydrogenase (NADP(+)) (269 aa).

Residues 17 to 19 and Thr-64 contribute to the shikimate site; that span reads SKS. Lys-68 acts as the Proton acceptor in catalysis. Glu-80 lines the NADP(+) pocket. Residues Asn-89 and Asp-105 each coordinate shikimate. Residues 130 to 134, 154 to 159, and Met-213 each bind NADP(+); these read GAGGA and NRTHAK. Shikimate is bound at residue Tyr-215. NADP(+) is bound at residue Gly-237.

Belongs to the shikimate dehydrogenase family. Homodimer.

It catalyses the reaction shikimate + NADP(+) = 3-dehydroshikimate + NADPH + H(+). It functions in the pathway metabolic intermediate biosynthesis; chorismate biosynthesis; chorismate from D-erythrose 4-phosphate and phosphoenolpyruvate: step 4/7. Involved in the biosynthesis of the chorismate, which leads to the biosynthesis of aromatic amino acids. Catalyzes the reversible NADPH linked reduction of 3-dehydroshikimate (DHSA) to yield shikimate (SA). The chain is Shikimate dehydrogenase (NADP(+)) from Neisseria cinerea.